The chain runs to 69 residues: NAD(P)H-quinone oxidoreductase subunit O (69 aa).

Belongs to the complex I NdhO subunit family. As to quaternary structure, NDH-1 can be composed of about 15 different subunits; different subcomplexes with different compositions have been identified which probably have different functions.

It is found in the cellular thylakoid membrane. It carries out the reaction a plastoquinone + NADH + (n+1) H(+)(in) = a plastoquinol + NAD(+) + n H(+)(out). The catalysed reaction is a plastoquinone + NADPH + (n+1) H(+)(in) = a plastoquinol + NADP(+) + n H(+)(out). Functionally, NDH-1 shuttles electrons from an unknown electron donor, via FMN and iron-sulfur (Fe-S) centers, to quinones in the respiratory and/or the photosynthetic chain. The immediate electron acceptor for the enzyme in this species is believed to be plastoquinone. Couples the redox reaction to proton translocation, and thus conserves the redox energy in a proton gradient. Cyanobacterial NDH-1 also plays a role in inorganic carbon-concentration. This is NAD(P)H-quinone oxidoreductase subunit O from Acaryochloris marina (strain MBIC 11017).